A 631-amino-acid chain; its full sequence is Pro-interleukin-16 (631 aa).

2 disordered regions span residues 30-269 (ENPG…FPLT) and 317-344 (PKEG…ASDT). The span at 132 to 144 (SSSSSSIKQRISS) shows a compositional bias: low complexity. S221 bears the Phosphoserine mark. Positions 322–344 (SPTSSSNEDSAANGSAETSASDT) are enriched in polar residues. The interaction with PPP1R12A, PPP1R12B and PPP1R12C stretch occupies residues 405-501 (KQLDSIHVTI…IVTRKLTAES (97 aa)). PDZ domains are found at residues 411–496 (HVTI…VTRK) and 533–618 (TVTL…IRRK).

In terms of assembly, homotetramer. Pro-interleukin-16 interacts (via PDZ 2 domain) with PPP1R12A, PPP1R12B and PPP1R12C. Pro-interleukin-16 interacts with GRIN2A. Pro-interleukin-16 interacts with GABPB1. Pro-interleukin-16 interacts (via PDZ 3 domain) with HDAC3.

It localises to the secreted. It is found in the cytoplasm. The protein localises to the nucleus. In terms of biological role, interleukin-16 stimulates a migratory response in CD4+ lymphocytes, monocytes, and eosinophils. Primes CD4+ T-cells for IL-2 and IL-15 responsiveness. Also induces T-lymphocyte expression of interleukin 2 receptor. Ligand for CD4. Functionally, pro-interleukin-16 is involved in cell cycle progression in T-cells. Appears to be involved in transcriptional regulation of SKP2 and is probably part of a transcriptional repression complex on the core promoter of the SKP2 gene. May act as a scaffold for GABPB1 (the DNA-binding subunit the GABP transcription factor complex) and HDAC3 thus maintaining transcriptional repression and blocking cell cycle progression in resting T-cells. The chain is Pro-interleukin-16 (IL16) from Chlorocebus aethiops (Green monkey).